The following is a 161-amino-acid chain: Vitamin K epoxide reductase complex subunit 1 (161 aa).

The Cytoplasmic segment spans residues 1 to 9; the sequence is MGTTWRSPG. The helical transmembrane segment at 10 to 29 threads the bilayer; that stretch reads LVRLALCLAGLALSLYALHV. Residues 30–80 are Lumenal-facing; that stretch reads KAARARDENYRALCDVGTAISCSRVFSSRWGRGFGLVEHMLGADSVLNQSN. The cysteines at positions 43 and 51 are disulfide-linked. Asparagine 80 provides a ligand contact to (S)-warfarin. Residues 81–95 form a helical membrane-spanning segment; it reads SIFGCLFYTLQLLLG. Residues 96–100 lie on the Cytoplasmic side of the membrane; it reads CLRGR. A helical transmembrane segment spans residues 101 to 128; it reads WASILLVLSSLVSVAGSVYLAWILFFVL. Topologically, residues 129–131 are lumenal; the sequence is YDF. A disulfide bridge connects residues cysteine 132 and cysteine 135. Residues 132-153 traverse the membrane as a helical segment; that stretch reads CIVCITTYAINVGLMLLSFQKV. Cysteine 135 and tyrosine 139 together coordinate phylloquinone. Tyrosine 139 contributes to the (S)-warfarin binding site. Topologically, residues 154–161 are cytoplasmic; sequence PEHKTKKH.

The protein belongs to the VKOR family. Detected in liver.

The protein resides in the endoplasmic reticulum membrane. The catalysed reaction is phylloquinone + [protein]-disulfide + H2O = 2,3-epoxyphylloquinone + [protein]-dithiol. It carries out the reaction phylloquinol + [protein]-disulfide = phylloquinone + [protein]-dithiol. Its activity is regulated as follows. Inhibited by warfarin (coumadin). Warfarin locks VKORC1 in both redox states into the closed conformation. Its function is as follows. Involved in vitamin K metabolism. Catalytic subunit of the vitamin K epoxide reductase (VKOR) complex which reduces inactive vitamin K 2,3-epoxide to active vitamin K. Vitamin K is required for the gamma-carboxylation of various proteins, including clotting factors, and is required for normal blood coagulation, but also for normal bone development. The protein is Vitamin K epoxide reductase complex subunit 1 (Vkorc1) of Mus musculus (Mouse).